A 489-amino-acid chain; its full sequence is MVSETKTTEAPGLRRELKARHLTMIAIGGSIGTGLFVASGATISQAGPGGALLSYMLIGLMVYFLMTSLGELAAYMPVSGSFATYGQNYVEEGFGFALGWNYWYNWAVTIAVDLVAAQLVMSWWFPDTPGWIWSALFLGVIFLLNYISVRGFGEAEYWFSLIKVTTVIVFIIVGVLMIIGIFKGAQPAGWSNWTIGEAPFAGGFAAMIGVAMIVGFSFQGTELIGIAAGESEDPAKNIPRAVRQVFWRILLFYVFAILIISLIIPYTDPSLLRNDVKDISVSPFTLVFQHAGLLSAAAVMNAVILTAVLSAGNSGMYASTRMLYTLACDGKAPRIFAKLSRGGVPRNALYATTVIAGLCFLTSMFGNQTVYLWLLNTSGMTGFIAWLGIAISHYRFRRGYVLQGHDINDLPYRSGFFPLGPIFAFILCLIITLGQNYEAFLKDTIDWGGVAATYIGIPLFLIIWFGYKLIKGTHFVRYSEMKFPQNDKK.

The Cytoplasmic segment spans residues 2–22 (VSETKTTEAPGLRRELKARHL). Residues 23–43 (TMIAIGGSIGTGLFVASGATI) form a helical membrane-spanning segment. The Periplasmic segment spans residues 44–45 (SQ). A helical membrane pass occupies residues 46–66 (AGPGGALLSYMLIGLMVYFLM). Over 67–105 (TSLGELAAYMPVSGSFATYGQNYVEEGFGFALGWNYWYN) the chain is Cytoplasmic. Residues 106 to 126 (WAVTIAVDLVAAQLVMSWWFP) traverse the membrane as a helical segment. Residues 127 to 128 (DT) are Periplasmic-facing. The chain crosses the membrane as a helical span at residues 129–149 (PGWIWSALFLGVIFLLNYISV). Residues 150–161 (RGFGEAEYWFSL) lie on the Cytoplasmic side of the membrane. A helical transmembrane segment spans residues 162 to 182 (IKVTTVIVFIIVGVLMIIGIF). Topologically, residues 183–197 (KGAQPAGWSNWTIGE) are periplasmic. Residues 198-218 (APFAGGFAAMIGVAMIVGFSF) form a helical membrane-spanning segment. At 219–244 (QGTELIGIAAGESEDPAKNIPRAVRQ) the chain is on the cytoplasmic side. A helical transmembrane segment spans residues 245 to 265 (VFWRILLFYVFAILIISLIIP). Residues 266 to 290 (YTDPSLLRNDVKDISVSPFTLVFQH) are Periplasmic-facing. The chain crosses the membrane as a helical span at residues 291 to 311 (AGLLSAAAVMNAVILTAVLSA). Residues 312-346 (GNSGMYASTRMLYTLACDGKAPRIFAKLSRGGVPR) are Cytoplasmic-facing. The chain crosses the membrane as a helical span at residues 347-367 (NALYATTVIAGLCFLTSMFGN). The Periplasmic portion of the chain corresponds to 368-370 (QTV). A helical membrane pass occupies residues 371–391 (YLWLLNTSGMTGFIAWLGIAI). Residues 392 to 413 (SHYRFRRGYVLQGHDINDLPYR) lie on the Cytoplasmic side of the membrane. A helical transmembrane segment spans residues 414-434 (SGFFPLGPIFAFILCLIITLG). Over 435–446 (QNYEAFLKDTID) the chain is Periplasmic. A helical membrane pass occupies residues 447 to 467 (WGGVAATYIGIPLFLIIWFGY). Residues 468–489 (KLIKGTHFVRYSEMKFPQNDKK) lie on the Cytoplasmic side of the membrane.

It belongs to the amino acid-polyamine-organocation (APC) superfamily. Amino acid transporter (AAT) (TC 2.A.3.1) family. As to quaternary structure, interacts strongly with the transcriptional activator CadC in the absence of lysine or at low lysine concentrations. Interaction is markedly attenuated under increasing lysine levels. Concomitant pH-dependent protonation of periplasmic amino acids in both proteins dissolves their electrostatic connections resulting in further destabilization of the CadC/LysP interaction. Low pH promotes oligomerization of LysP.

Its subcellular location is the cell inner membrane. The catalysed reaction is L-lysine(out) + H(+)(out) = L-lysine(in) + H(+)(in). Permease involved in lysine uptake. In addition, functions as a lysine sensor that mediates the lysine-dependent regulation of the transcriptional activator CadC. In the absence of lysine, or at low lysine concentrations, LysP inhibits CadC by an interaction with the transmembrane domain of CadC. In the presence of lysine, LysP loses its ability to interact with and inhibit CadC, and acts as a lysine permease. The protein is Lysine-specific permease LysP of Escherichia coli (strain K12).